Reading from the N-terminus, the 73-residue chain is Small ribosomal subunit protein bS18 (73 aa).

This sequence belongs to the bacterial ribosomal protein bS18 family. In terms of assembly, part of the 30S ribosomal subunit. Forms a tight heterodimer with protein bS6.

In terms of biological role, binds as a heterodimer with protein bS6 to the central domain of the 16S rRNA, where it helps stabilize the platform of the 30S subunit. In Prochlorococcus marinus (strain SARG / CCMP1375 / SS120), this protein is Small ribosomal subunit protein bS18.